The chain runs to 96 residues: Co-chaperonin GroES (96 aa).

Belongs to the GroES chaperonin family. Heptamer of 7 subunits arranged in a ring. Interacts with the chaperonin GroEL.

The protein resides in the cytoplasm. Together with the chaperonin GroEL, plays an essential role in assisting protein folding. The GroEL-GroES system forms a nano-cage that allows encapsulation of the non-native substrate proteins and provides a physical environment optimized to promote and accelerate protein folding. GroES binds to the apical surface of the GroEL ring, thereby capping the opening of the GroEL channel. The chain is Co-chaperonin GroES from Myxococcus xanthus (strain DK1622).